Here is a 169-residue protein sequence, read N- to C-terminus: Protein-export protein SecB (169 aa).

Belongs to the SecB family. As to quaternary structure, homotetramer, a dimer of dimers. One homotetramer interacts with 1 SecA dimer.

It localises to the cytoplasm. In terms of biological role, one of the proteins required for the normal export of preproteins out of the cell cytoplasm. It is a molecular chaperone that binds to a subset of precursor proteins, maintaining them in a translocation-competent state. It also specifically binds to its receptor SecA. The protein is Protein-export protein SecB of Haemophilus influenzae (strain 86-028NP).